Here is a 225-residue protein sequence, read N- to C-terminus: UPF0758 protein Sfri_3828 (225 aa).

The MPN domain occupies 102–224 (ILTNPDLTRD…IVSFAERGWI (123 aa)). H173, H175, and D186 together coordinate Zn(2+). The JAMM motif motif lies at 173 to 186 (HNHPSGIAEPSQAD).

This sequence belongs to the UPF0758 family.

The chain is UPF0758 protein Sfri_3828 from Shewanella frigidimarina (strain NCIMB 400).